A 527-amino-acid polypeptide reads, in one-letter code: V-set and immunoglobulin domain-containing protein 10 (527 aa).

The signal sequence occupies residues 1–13 (MWTRRWIQFLVLC). Ig-like C2-type domains follow at residues 14–111 (LHLW…LKVS), 123–212 (PTRT…RQLL), 216–306 (PPIT…CQIQ), and 310–399 (PLLE…KEIN). At 23–409 (YLGVFRGDVN…VWLTVNKPHN (387 aa)) the chain is on the extracellular side. N-linked (GlcNAc...) asparagine glycosylation is found at Asn32, Asn41, Asn52, Asn64, Asn74, Asn90, Asn129, Asn139, Asn191, Asn206, Asn226, Asn260, Asn276, Asn325, Asn346, and Asn375. Cysteines 144 and 194 form a disulfide. Cys238 and Cys288 are oxidised to a cystine. A disulfide bridge links Cys330 with Cys387. The chain crosses the membrane as a helical span at residues 410–430 (IVGLVTALLLLFLLVVAIITG). Topologically, residues 431–527 (TVLYCDPQIY…TGEENQNEEI (97 aa)) are cytoplasmic. Positions 501-527 (RPPESTSSDLFSEVSDDTGEENQNEEI) are disordered. Acidic residues predominate over residues 514–527 (VSDDTGEENQNEEI).

The protein resides in the membrane. The polypeptide is V-set and immunoglobulin domain-containing protein 10 (vsig10) (Xenopus laevis (African clawed frog)).